A 1044-amino-acid polypeptide reads, in one-letter code: Translation initiation factor IF-2 (1044 aa).

The disordered stretch occupies residues 31-425; it reads VRSASSTVEP…RKSKRAKRQE (395 aa). Composition is skewed to pro residues over residues 77 to 98 and 106 to 116; these read GPAP…PQPA and APAPAPAPRPA. Residues 117 to 148 show a composition bias toward low complexity; the sequence is EPAANPAPAAPPAFQAPAPAPAERPAAAQRPA. The segment covering 168-185 has biased composition (gly residues); sequence GGPGQGPRPGARPGGPGA. Residues 204–247 show a composition bias toward basic and acidic residues; it reads GPGDRPERSERPDRGDRPQGDRPRSDRPQGERQQGDRPQGDRPG. Positions 285 to 304 are enriched in low complexity; sequence GGAPRPGNNPFASNQGMPRP. A compositionally biased stretch (pro residues) spans 305 to 328; sequence QGGPRPTPAGPGGPRPGGPRPNPG. Positions 329–338 are enriched in low complexity; it reads MMPARPTVGR. Residues 339–409 show a composition bias toward gly residues; the sequence is PGAGPGAGRP…GTQGAFGRAG (71 aa). Basic residues predominate over residues 413 to 422; the sequence is VRGRKSKRAK. Positions 537 to 709 constitute a tr-type G domain; it reads ARPPVVTVMG…VLLTADASLD (173 aa). The tract at residues 546 to 553 is G1; sequence GHVDHGKT. Residue 546–553 coordinates GTP; the sequence is GHVDHGKT. The interval 571 to 575 is G2; that stretch reads GITQH. The tract at residues 596 to 599 is G3; it reads DTPG. GTP is bound by residues 596–600 and 650–653; these read DTPGH and NKVD. The interval 650–653 is G4; it reads NKVD. The segment at 686-688 is G5; sequence SAR.

It belongs to the TRAFAC class translation factor GTPase superfamily. Classic translation factor GTPase family. IF-2 subfamily.

It localises to the cytoplasm. Functionally, one of the essential components for the initiation of protein synthesis. Protects formylmethionyl-tRNA from spontaneous hydrolysis and promotes its binding to the 30S ribosomal subunits. Also involved in the hydrolysis of GTP during the formation of the 70S ribosomal complex. The chain is Translation initiation factor IF-2 from Kineococcus radiotolerans (strain ATCC BAA-149 / DSM 14245 / SRS30216).